The chain runs to 428 residues: Enolase (428 aa).

Glutamine 173 serves as a coordination point for (2R)-2-phosphoglycerate. Glutamate 217 serves as the catalytic Proton donor. The Mg(2+) site is built by aspartate 253, glutamate 294, and aspartate 320. Positions 345, 374, 375, and 396 each coordinate (2R)-2-phosphoglycerate. Lysine 345 functions as the Proton acceptor in the catalytic mechanism.

It belongs to the enolase family. It depends on Mg(2+) as a cofactor.

It localises to the cytoplasm. The protein localises to the secreted. Its subcellular location is the cell surface. It catalyses the reaction (2R)-2-phosphoglycerate = phosphoenolpyruvate + H2O. The protein operates within carbohydrate degradation; glycolysis; pyruvate from D-glyceraldehyde 3-phosphate: step 4/5. In terms of biological role, catalyzes the reversible conversion of 2-phosphoglycerate (2-PG) into phosphoenolpyruvate (PEP). It is essential for the degradation of carbohydrates via glycolysis. The protein is Enolase of Methanosarcina mazei (strain ATCC BAA-159 / DSM 3647 / Goe1 / Go1 / JCM 11833 / OCM 88) (Methanosarcina frisia).